The primary structure comprises 186 residues: DNA-directed RNA polymerase 22 kDa subunit (186 aa).

It belongs to the poxviridae DNA-directed RNA polymerase 22 kDa subunit family. In terms of assembly, the DNA-dependent RNA polymerase used for intermediate and late genes expression consists of eight subunits Rpo30/OPG66, Rpo7/OPG90, Rpo22/OPG103, Rpo147/OPG105, Rpo18/OPG119, Rpo19/OPG131, Rpo132/OPG151 and Rpo35/OPG156. The same holoenzyme, with the addition of the transcription-specificity factor OPG109, is used for early gene expression.

It localises to the virion. It carries out the reaction RNA(n) + a ribonucleoside 5'-triphosphate = RNA(n+1) + diphosphate. Functionally, part of the DNA-dependent RNA polymerase which catalyzes the transcription of viral DNA into RNA using the four ribonucleoside triphosphates as substrates. Responsible for the transcription of early, intermediate and late genes. DNA-dependent RNA polymerase associates with the early transcription factor (ETF), itself composed of OPG118 and OPG133, thereby allowing the early genes transcription. Late transcription, and probably also intermediate transcription, require newly synthesized RNA polymerase. This Vertebrata (FPV) protein is DNA-directed RNA polymerase 22 kDa subunit (OPG103).